A 686-amino-acid chain; its full sequence is Hexamerin 70c (686 aa).

The signal sequence occupies residues 1–19 (MLSKVVLLVALAAICGAQG). The Hemocyanin N-terminal domain maps to 32–155 (FLHKQKKIFD…IAVLYRPDTK (124 aa)). Residues 161-431 (AIYEIYPNYF…MLYQNILSYF (271 aa)) enclose the Hemocyanin middle domain. Asn-205 and Asn-662 each carry an N-linked (GlcNAc...) asparagine glycan. A Hemocyanin C-terminal domain is found at 440 to 676 (QYSQSELQMP…NMYFKDVFIY (237 aa)).

The protein belongs to the hemocyanin/hexamerin family. As to quaternary structure, probable homohexamer. As to expression, expressed in the fat body and secreted into the hemolymph (at protein level). Present in trophocytes and oenocytes of the fat body (at protein level). Not expressed in ovary or testis.

It is found in the secreted. The protein resides in the nucleus. Its subcellular location is the cytoplasm. The protein localises to the cytoplasmic granule. Storage protein that may function as a nutrient supply to compensate for lack of dietary proteins during metamorphosis and egg production. This is Hexamerin 70c from Apis mellifera (Honeybee).